The following is a 149-amino-acid chain: MEIVAENRKARFDYFVLQEYDAGMVLVGSEVKSLRQRKVNMGDAYVLEKDMELWIHNLHISEYNRSDRKNHKPLRVRKLLLRKREIHKIAGNIKVSGLAVVPLMIFFNNKGIAKIKIAIVKGKKLYDKREAIKTRDWQREKSRISRREV.

Belongs to the SmpB family.

It localises to the cytoplasm. In terms of biological role, required for rescue of stalled ribosomes mediated by trans-translation. Binds to transfer-messenger RNA (tmRNA), required for stable association of tmRNA with ribosomes. tmRNA and SmpB together mimic tRNA shape, replacing the anticodon stem-loop with SmpB. tmRNA is encoded by the ssrA gene; the 2 termini fold to resemble tRNA(Ala) and it encodes a 'tag peptide', a short internal open reading frame. During trans-translation Ala-aminoacylated tmRNA acts like a tRNA, entering the A-site of stalled ribosomes, displacing the stalled mRNA. The ribosome then switches to translate the ORF on the tmRNA; the nascent peptide is terminated with the 'tag peptide' encoded by the tmRNA and targeted for degradation. The ribosome is freed to recommence translation, which seems to be the essential function of trans-translation. This is SsrA-binding protein from Anaplasma marginale (strain Florida).